The primary structure comprises 192 residues: UPF0312 protein Spro_1887 (192 aa).

The signal sequence occupies residues 1 to 23; the sequence is MLKKTVLGLTAGAMLLSAGSALA.

It belongs to the UPF0312 family. Type 1 subfamily.

It localises to the periplasm. The sequence is that of UPF0312 protein Spro_1887 from Serratia proteamaculans (strain 568).